The primary structure comprises 317 residues: Porphobilinogen deaminase (317 aa).

C245 is subject to S-(dipyrrolylmethanemethyl)cysteine.

It belongs to the HMBS family. As to quaternary structure, monomer. Requires dipyrromethane as cofactor.

The enzyme catalyses 4 porphobilinogen + H2O = hydroxymethylbilane + 4 NH4(+). It functions in the pathway porphyrin-containing compound metabolism; protoporphyrin-IX biosynthesis; coproporphyrinogen-III from 5-aminolevulinate: step 2/4. It participates in porphyrin-containing compound metabolism; chlorophyll biosynthesis. Functionally, tetrapolymerization of the monopyrrole PBG into the hydroxymethylbilane pre-uroporphyrinogen in several discrete steps. This Prochlorococcus marinus (strain MIT 9303) protein is Porphobilinogen deaminase.